A 545-amino-acid polypeptide reads, in one-letter code: Carboxypeptidase Y homolog A (545 aa).

The first 17 residues, 1–17 (MKSLALALLVGGAIAAG), serve as a signal peptide directing secretion. The propeptide occupies 18–123 (PQQQVLQAPV…KLEAYDLRVK (106 aa)). 5 disulfide bridges follow: C177/C416, C311/C325, C335/C358, C342/C351, and C380/C386. N208 is a glycosylation site (N-linked (GlcNAc...) asparagine). Residue S264 is part of the active site. Residue D455 is part of the active site. N-linked (GlcNAc...) asparagine glycans are attached at residues N485, N491, and N506. The active site involves H517.

This sequence belongs to the peptidase S10 family.

The protein resides in the vacuole. It catalyses the reaction Release of a C-terminal amino acid with broad specificity.. Vacuolar carboxypeptidase involved in degradation of small peptides. Digests preferentially peptides containing an aliphatic or hydrophobic residue in P1' position, as well as methionine, leucine or phenylalanine in P1 position of ester substrate. The protein is Carboxypeptidase Y homolog A (CPYA) of Blastomyces gilchristii (strain SLH14081) (Blastomyces dermatitidis).